A 566-amino-acid chain; its full sequence is Membrane protein insertase YidC (566 aa).

Helical transmembrane passes span 3 to 23 (IKRI…FNAW), 346 to 366 (GWLW…HAVV), 369 to 389 (WGWS…WFSA), 436 to 456 (GGCL…YVII), and 509 to 529 (MWIL…GLVL).

It belongs to the OXA1/ALB3/YidC family. Type 1 subfamily. Interacts with the Sec translocase complex via SecD. Specifically interacts with transmembrane segments of nascent integral membrane proteins during membrane integration.

Its subcellular location is the cell inner membrane. Functionally, required for the insertion and/or proper folding and/or complex formation of integral membrane proteins into the membrane. Involved in integration of membrane proteins that insert both dependently and independently of the Sec translocase complex, as well as at least some lipoproteins. Aids folding of multispanning membrane proteins. The sequence is that of Membrane protein insertase YidC from Coxiella burnetii (strain Dugway 5J108-111).